We begin with the raw amino-acid sequence, 140 residues long: Putative pre-16S rRNA nuclease (140 aa).

It belongs to the YqgF nuclease family.

The protein localises to the cytoplasm. In terms of biological role, could be a nuclease involved in processing of the 5'-end of pre-16S rRNA. The chain is Putative pre-16S rRNA nuclease from Vibrio vulnificus (strain YJ016).